The chain runs to 676 residues: MEMSGLGRKRVSKWDSKEDTHHHHSSVNANSASYYRDKESEPVRFNAESNGEARTRSRVSQNNDNSYFSEQDGTRQQFVRRSGSRSNSRSRSRSRSPVYRARRDAGSYDRHKTRTQVSPTPIREFNKRGSDHLFDQSRSDHYGWEDNIRKPRETKYHTDDFREEAMMEGARSSDYNNTDYPEDNSRIRRRRSEFTGEKETQRRDGGDGEGGFHRSSNIPCKFFAAGTGFCRNGKYCRFSHHVADRKQPQDNNNNFYRQDNNNHTSGHNKWNDVERLDNGRVGGIEVSRASKKGVSESKGNGSSSWIDDMEMSPDWNYGVQALKKPVKEDHSVGIIGQSSQSRVLKDDQRSSGMFSHGGRTMAEKPVAASHQSYSNSVNVAPVETFNQNHNALPYQSSLTAGGSQQVLAAAATNFSVGSNLSNLESGKVYQDNHHSTVEKPVLVQNTVSREQIDQITNISASLAQFLANGQPIPQLEQALQLPLHSESVQPNQATTQSNVVSSNPNQLWGLGMSTGAEGVPAVTASKISNVEEIQEVSLDPKENGDKKTDEASKEEEGKKTGEDTNDAENVVDEDEDGDDDGSDEENKKEKDPKGMRAFKFALVEVVKELLKPAWKEGKLNKDGYKNIVKKVAEKVTGTMQSGNVPQTQEKIDHYLSASKPKLTKLVQAYVGKIKKT.

Disordered stretches follow at residues 1-134 (MEMS…DHLF), 172-217 (SSDY…RSSN), 245-307 (RKQP…SWID), 487-506 (SVQPNQATTQSNVVSSNPNQ), and 533-594 (IQEV…DPKG). A compositionally biased stretch (basic and acidic residues) spans 12-21 (SKWDSKEDTH). The span at 58–79 (RVSQNNDNSYFSEQDGTRQQFV) shows a compositional bias: polar residues. 3 stretches are compositionally biased toward basic and acidic residues: residues 101 to 110 (ARRDAGSYDR), 124 to 134 (EFNKRGSDHLF), and 192 to 212 (SEFTGEKETQRRDGGDGEGGF). The segment at 214–243 (RSSNIPCKFFAAGTGFCRNGKYCRFSHHVA) adopts a C3H1-type zinc-finger fold. Over residues 251–262 (NNNNFYRQDNNN) the composition is skewed to low complexity. Residues 269 to 278 (KWNDVERLDN) show a composition bias toward basic and acidic residues. Residues 538-562 (LDPKENGDKKTDEASKEEEGKKTGE) show a composition bias toward basic and acidic residues. Acidic residues predominate over residues 563 to 583 (DTNDAENVVDEDEDGDDDGSD). The segment covering 584–594 (EENKKEKDPKG) has biased composition (basic and acidic residues).

The chain is Zinc finger CCCH domain-containing protein 38 from Arabidopsis thaliana (Mouse-ear cress).